Reading from the N-terminus, the 207-residue chain is uncharacterized protein (207 aa).

A run of 5 helical transmembrane segments spans residues 28–48 (IAVLLPLIEAFLPFLPLIVFV), 59–79 (EGFILSWAGSTAGSILVFLIV), 112–132 (MFLLLCFPFTPSAAVNVVAGL), 140–160 (FILAAASGKLVMIFMISFIGY), and 165–185 (LITQPIRTVIAVLVITVLWYV).

Its subcellular location is the cell membrane. This is an uncharacterized protein from Bacillus subtilis (strain 168).